Consider the following 533-residue polypeptide: Retinoid isomerohydrolase (533 aa).

Serine 2 is modified (N-acetylserine). Phosphothreonine is present on residues threonine 101 and threonine 105. A lipid anchor (S-palmitoyl cysteine; in membrane form) is attached at cysteine 112. Lysine 113 carries the N6-acetyllysine modification. Residue serine 117 is modified to Phosphoserine. Position 180 (histidine 180) interacts with Fe cation. Cysteine 231 is lipidated: S-palmitoyl cysteine; in membrane form. Residues histidine 241 and histidine 313 each contribute to the Fe cation site. Residues cysteine 329 and cysteine 330 are each lipidated (S-palmitoyl cysteine; in membrane form). Histidine 527 contacts Fe cation.

Belongs to the carotenoid oxygenase family. Interacts with MYO7A; this mediates light-dependent intracellular transport of RPE65. Fe(2+) is required as a cofactor. In terms of processing, palmitoylation by LRAT regulates ligand binding specificity; the palmitoylated form (membrane form) specifically binds all-trans-retinyl-palmitate, while the soluble unpalmitoylated form binds all-trans-retinol (vitamin A). In terms of tissue distribution, retinal pigment epithelium specific.

Its subcellular location is the cytoplasm. The protein resides in the cell membrane. It localises to the microsome membrane. It catalyses the reaction an all-trans-retinyl ester + H2O = 11-cis-retinol + a fatty acid + H(+). It carries out the reaction lutein = (3R,3'S)-zeaxanthin. The enzyme catalyses all-trans-retinyl hexadecanoate + H2O = 11-cis-retinol + hexadecanoate + H(+). Functionally, critical isomerohydrolase in the retinoid cycle involved in regeneration of 11-cis-retinal, the chromophore of rod and cone opsins. Catalyzes the cleavage and isomerization of all-trans-retinyl fatty acid esters to 11-cis-retinol which is further oxidized by 11-cis retinol dehydrogenase to 11-cis-retinal for use as visual chromophore. Essential for the production of 11-cis retinal for both rod and cone photoreceptors. Also capable of catalyzing the isomerization of lutein to meso-zeaxanthin an eye-specific carotenoid. The soluble form binds vitamin A (all-trans-retinol), making it available for LRAT processing to all-trans-retinyl ester. The membrane form, palmitoylated by LRAT, binds all-trans-retinyl esters, making them available for IMH (isomerohydrolase) processing to all-cis-retinol. The soluble form is regenerated by transferring its palmitoyl groups onto 11-cis-retinol, a reaction catalyzed by LRAT. The polypeptide is Retinoid isomerohydrolase (RPE65) (Canis lupus familiaris (Dog)).